We begin with the raw amino-acid sequence, 174 residues long: 3-hydroxyanthranilate 3,4-dioxygenase (174 aa).

Arg47 provides a ligand contact to O2. 3 residues coordinate Fe cation: His51, Glu57, and His95. A substrate-binding site is contributed by Glu57. Substrate contacts are provided by Arg99 and Glu110. Fe cation is bound by residues Cys125, Cys128, Cys162, and Cys165.

The protein belongs to the 3-HAO family. Homodimer. Requires Fe(2+) as cofactor.

It carries out the reaction 3-hydroxyanthranilate + O2 = (2Z,4Z)-2-amino-3-carboxymuconate 6-semialdehyde. Its pathway is cofactor biosynthesis; NAD(+) biosynthesis; quinolinate from L-kynurenine: step 3/3. Catalyzes the oxidative ring opening of 3-hydroxyanthranilate to 2-amino-3-carboxymuconate semialdehyde, which spontaneously cyclizes to quinolinate. This is 3-hydroxyanthranilate 3,4-dioxygenase from Paraburkholderia phytofirmans (strain DSM 17436 / LMG 22146 / PsJN) (Burkholderia phytofirmans).